An 88-amino-acid chain; its full sequence is Meiosis expressed gene 1 protein homolog (88 aa).

Belongs to the MEIG1 family. As to quaternary structure, interacts with PACRG. Interacts with MORN3.

Its function is as follows. Essential for spermiogenesis. The sequence is that of Meiosis expressed gene 1 protein homolog from Homo sapiens (Human).